A 300-amino-acid chain; its full sequence is tRNA pseudouridine synthase B (300 aa).

Aspartate 47 (nucleophile) is an active-site residue.

The protein belongs to the pseudouridine synthase TruB family. Type 1 subfamily.

The enzyme catalyses uridine(55) in tRNA = pseudouridine(55) in tRNA. In terms of biological role, responsible for synthesis of pseudouridine from uracil-55 in the psi GC loop of transfer RNAs. The sequence is that of tRNA pseudouridine synthase B from Azoarcus sp. (strain BH72).